The chain runs to 869 residues: Valine--tRNA ligase (869 aa).

The 'HIGH' region motif lies at 47–57; sequence PYPTGNFHIGN. The 'KMSKS' region motif lies at 521-525; the sequence is KMSKS. An ATP-binding site is contributed by Lys-524.

This sequence belongs to the class-I aminoacyl-tRNA synthetase family. ValS type 2 subfamily.

Its subcellular location is the cytoplasm. The catalysed reaction is tRNA(Val) + L-valine + ATP = L-valyl-tRNA(Val) + AMP + diphosphate. Its function is as follows. Catalyzes the attachment of valine to tRNA(Val). As ValRS can inadvertently accommodate and process structurally similar amino acids such as threonine, to avoid such errors, it has a 'posttransfer' editing activity that hydrolyzes mischarged Thr-tRNA(Val) in a tRNA-dependent manner. This chain is Valine--tRNA ligase, found in Methanosarcina barkeri (strain Fusaro / DSM 804).